A 522-amino-acid polypeptide reads, in one-letter code: Signal transduction histidine-protein kinase/phosphatase MprB (522 aa).

Residues 1–30 (MIRLHRPQRPPLRAPLRATPSLSLRWRVML) are Cytoplasmic-facing. Residues 31-51 (LAMSMVAMVVVLMAFAVYAVI) form a helical membrane-spanning segment. At 52-167 (SAALYSDIDN…PTEAVMNKLR (116 aa)) the chain is on the extracellular side. The chain crosses the membrane as a helical span at residues 168–188 (WVLLIVGGVGVAVAAVAGGMV). Residues 189–522 (TRAGLRPVAR…SVDSQSARAR (334 aa)) are Cytoplasmic-facing. The HAMP domain occupies 190–242 (RAGLRPVARLTEAAERVARTDDLRPIPVFGSDELARLTESFNLMLRALAESRE). The region spanning 250-470 (DAGHELRTPL…SFYVLLPGRP (221 aa)) is the Histidine kinase domain. The residue at position 253 (His-253) is a Phosphohistidine; by autocatalysis. Positions 468 to 522 (GRPLPPAGHSTPAGESETDKAEAATDPAVPVAGDTANSRESANVISVDSQSARAR) are disordered. The segment covering 502-522 (TANSRESANVISVDSQSARAR) has biased composition (polar residues).

Mg(2+) is required as a cofactor. Mn(2+) serves as cofactor. Autophosphorylated.

The protein resides in the cell membrane. The enzyme catalyses ATP + protein L-histidine = ADP + protein N-phospho-L-histidine.. Member of the two-component regulatory system MprB/MprA which contributes to maintaining a balance among several systems involved in stress resistance and is required for establishment and maintenance of persistent infection in the host. In response to environmental signals MprB acts both as a membrane-associated protein kinase that undergoes autophosphorylation and subsequently transfers the phosphate to MprA, and a protein phosphatase that dephosphorylates phospho-MprA. The protein is Signal transduction histidine-protein kinase/phosphatase MprB (mprB) of Mycobacterium avium (strain 104).